Here is a 157-residue protein sequence, read N- to C-terminus: Tuberoinfundibular peptide of 39 residues (157 aa).

Residues 1–25 (MALSLPPRPALLFLVLMSVTLMASA) form the signal peptide. Residues 26–116 (FPQPQLRPLQ…DWPSRVGHQQ (91 aa)) constitute a propeptide that is removed on maturation.

Belongs to the parathyroid hormone family.

It is found in the secreted. Its function is as follows. Plays a role as a potent and selective agonist of pth2r resulting in adenyl cyclase activation and intracellular calcium level elevation. The chain is Tuberoinfundibular peptide of 39 residues from Danio rerio (Zebrafish).